Here is a 1257-residue protein sequence, read N- to C-terminus: Probable aldehyde oxidase gad-3 (1257 aa).

Residues 4–91 (TGIFFNVNGK…KTFVITVEGV (88 aa)) form the 2Fe-2S ferredoxin-type domain. The [2Fe-2S] cluster site is built by C43, C48, C51, and C73. The region spanning 229 to 459 (LKGDRIELLL…TSLEVHIDAL (231 aa)) is the FAD-binding PCMH-type domain. The active-site Proton acceptor is the E1208.

It belongs to the xanthine dehydrogenase family. The cofactor is [2Fe-2S] cluster. FAD serves as cofactor. It depends on Mo-molybdopterin as a cofactor.

It catalyses the reaction an aldehyde + O2 + H2O = a carboxylate + H2O2 + H(+). Its function is as follows. May be involved in the metabolism of 1-methylnicotinamide (MNA). Linked to regulation of longevity through generation of reactive oxygen species, where it probably functions in a pathway downstream of the sirtuin sir-2.1 and the nicotinamide N-methyltransferase anmt-1. The protein is Probable aldehyde oxidase gad-3 of Caenorhabditis elegans.